We begin with the raw amino-acid sequence, 67 residues long: Kappa-conotoxin-like Em11.8 (67 aa).

Residues 1–26 form the signal peptide; the sequence is MMFRLTSVSCFLLVIACLNLFQVVLT. 4 disulfides stabilise this stretch: Cys-29–Cys-43, Cys-36–Cys-48, Cys-42–Cys-51, and Cys-47–Cys-55. Phe-59 bears the Phenylalanine amide mark. The propeptide occupies 63-67; that stretch reads ATFQE.

It belongs to the conotoxin I2 superfamily. Expressed by the venom duct.

The protein resides in the secreted. Functionally, inhibits the vertebrate voltage-gated potassium channels Kv1.1/KCNA1 and Kv1.3/KCNA3. This is Kappa-conotoxin-like Em11.8 from Conus emaciatus (False virgin cone).